The following is a 592-amino-acid chain: Aspartate--tRNA(Asp/Asn) ligase (592 aa).

Glutamate 173 contacts L-aspartate. Residues 197–200 form an aspartate region; that stretch reads QLFK. Residue arginine 219 participates in L-aspartate binding. Residues 219 to 221 and glutamine 228 each bind ATP; that span reads RDE. An L-aspartate-binding site is contributed by histidine 451. Position 486 (glutamate 486) interacts with ATP. L-aspartate is bound at residue arginine 493. 538-541 provides a ligand contact to ATP; it reads GLDR.

The protein belongs to the class-II aminoacyl-tRNA synthetase family. Type 1 subfamily. In terms of assembly, homodimer.

It localises to the cytoplasm. It catalyses the reaction tRNA(Asx) + L-aspartate + ATP = L-aspartyl-tRNA(Asx) + AMP + diphosphate. In terms of biological role, aspartyl-tRNA synthetase with relaxed tRNA specificity since it is able to aspartylate not only its cognate tRNA(Asp) but also tRNA(Asn). Reaction proceeds in two steps: L-aspartate is first activated by ATP to form Asp-AMP and then transferred to the acceptor end of tRNA(Asp/Asn). The chain is Aspartate--tRNA(Asp/Asn) ligase from Alkalilimnicola ehrlichii (strain ATCC BAA-1101 / DSM 17681 / MLHE-1).